A 304-amino-acid polypeptide reads, in one-letter code: MPQQLSPINIETKKAISNARLKPLDIHYNESKPTTIQNTGKLVRINFKGGYISGGFLPNEYVLSSLRIYWGKEDDYGSNHLIDVYKYSGEINLVHWNKKKYSSYEEAKKHDDGLIIISIFLQVSDHKNVYFQKIVNQLDSIRSTNTSAPFDSVFYLDNLLPSKLDYFTYLGTTINHSADAVWIIFPTPINIHSDQLSKFRTLLSSSNHDGKPHYITENYRNPYKLNDDTQVYYSGEIIRAATTSPARENYFMRWLSDLRETCFSYYQKYIEGNKTFAIIAIVFVFILTAILFFMSQRYSREKQN.

In terms of domain architecture, Alpha-carbonic anhydrase spans 1–235; that stretch reads MPQQLSPINI…NDDTQVYYSG (235 aa). The Virion surface portion of the chain corresponds to 1 to 275; it reads MPQQLSPINI…YQKYIEGNKT (275 aa). The chain crosses the membrane as a helical span at residues 276–294; it reads FAIIAIVFVFILTAILFFM. The Intravirion segment spans residues 295 to 304; the sequence is SQRYSREKQN.

The protein belongs to the alpha-carbonic anhydrase family. In terms of assembly, homodimer; disulfide-linked. Apparently non-glycosylated.

The protein localises to the virion membrane. Functionally, binds to chondroitin sulfate on the cell surface to provide virion attachment to target cell. This chain is Cell surface-binding protein OPG105 (OPG105), found in Vaccinia virus (strain Ankara) (VACV).